The sequence spans 607 residues: UvrABC system protein C (607 aa).

The 79-residue stretch at 16–94 (GRPGVYRMFD…IKEWRPPYNI (79 aa)) folds into the GIY-YIG domain. One can recognise a UVR domain in the interval 203 to 238 (QQLGNELNAEMEKAAMALDFEKAAELRDQIALLRRV).

Belongs to the UvrC family. Interacts with UvrB in an incision complex.

It localises to the cytoplasm. The UvrABC repair system catalyzes the recognition and processing of DNA lesions. UvrC both incises the 5' and 3' sides of the lesion. The N-terminal half is responsible for the 3' incision and the C-terminal half is responsible for the 5' incision. This is UvrABC system protein C from Pseudomonas putida (strain ATCC 700007 / DSM 6899 / JCM 31910 / BCRC 17059 / LMG 24140 / F1).